A 156-amino-acid polypeptide reads, in one-letter code: ATP synthase subunit b (156 aa).

The chain crosses the membrane as a helical span at residues 13 to 33; the sequence is AFIIFVWFCMKFVWPPLMNAI.

This sequence belongs to the ATPase B chain family. As to quaternary structure, F-type ATPases have 2 components, F(1) - the catalytic core - and F(0) - the membrane proton channel. F(1) has five subunits: alpha(3), beta(3), gamma(1), delta(1), epsilon(1). F(0) has three main subunits: a(1), b(2) and c(10-14). The alpha and beta chains form an alternating ring which encloses part of the gamma chain. F(1) is attached to F(0) by a central stalk formed by the gamma and epsilon chains, while a peripheral stalk is formed by the delta and b chains.

It localises to the cell inner membrane. In terms of biological role, f(1)F(0) ATP synthase produces ATP from ADP in the presence of a proton or sodium gradient. F-type ATPases consist of two structural domains, F(1) containing the extramembraneous catalytic core and F(0) containing the membrane proton channel, linked together by a central stalk and a peripheral stalk. During catalysis, ATP synthesis in the catalytic domain of F(1) is coupled via a rotary mechanism of the central stalk subunits to proton translocation. Functionally, component of the F(0) channel, it forms part of the peripheral stalk, linking F(1) to F(0). This chain is ATP synthase subunit b, found in Shewanella woodyi (strain ATCC 51908 / MS32).